Here is a 195-residue protein sequence, read N- to C-terminus: Peptidyl-tRNA hydrolase (195 aa).

Y17 lines the tRNA pocket. The active-site Proton acceptor is H22. TRNA is bound by residues F68, N70, and N116.

This sequence belongs to the PTH family. In terms of assembly, monomer.

The protein localises to the cytoplasm. The catalysed reaction is an N-acyl-L-alpha-aminoacyl-tRNA + H2O = an N-acyl-L-amino acid + a tRNA + H(+). Functionally, hydrolyzes ribosome-free peptidyl-tRNAs (with 1 or more amino acids incorporated), which drop off the ribosome during protein synthesis, or as a result of ribosome stalling. In terms of biological role, catalyzes the release of premature peptidyl moieties from peptidyl-tRNA molecules trapped in stalled 50S ribosomal subunits, and thus maintains levels of free tRNAs and 50S ribosomes. The protein is Peptidyl-tRNA hydrolase of Shewanella denitrificans (strain OS217 / ATCC BAA-1090 / DSM 15013).